The chain runs to 201 residues: ATP-dependent Clp protease proteolytic subunit 2 (201 aa).

Ser-101 functions as the Nucleophile in the catalytic mechanism. Residue His-126 is part of the active site.

Belongs to the peptidase S14 family. In terms of assembly, fourteen ClpP subunits assemble into 2 heptameric rings which stack back to back to give a disk-like structure with a central cavity, resembling the structure of eukaryotic proteasomes.

The protein resides in the cytoplasm. It catalyses the reaction Hydrolysis of proteins to small peptides in the presence of ATP and magnesium. alpha-casein is the usual test substrate. In the absence of ATP, only oligopeptides shorter than five residues are hydrolyzed (such as succinyl-Leu-Tyr-|-NHMec, and Leu-Tyr-Leu-|-Tyr-Trp, in which cleavage of the -Tyr-|-Leu- and -Tyr-|-Trp bonds also occurs).. Functionally, cleaves peptides in various proteins in a process that requires ATP hydrolysis. Has a chymotrypsin-like activity. Plays a major role in the degradation of misfolded proteins. This is ATP-dependent Clp protease proteolytic subunit 2 from Prochlorococcus marinus subsp. pastoris (strain CCMP1986 / NIES-2087 / MED4).